Here is a 228-residue protein sequence, read N- to C-terminus: Cytidylate kinase (228 aa).

Residue 17-25 (GPSASGKGT) coordinates ATP.

It belongs to the cytidylate kinase family. Type 1 subfamily.

It is found in the cytoplasm. The catalysed reaction is CMP + ATP = CDP + ADP. It carries out the reaction dCMP + ATP = dCDP + ADP. This Paraburkholderia xenovorans (strain LB400) protein is Cytidylate kinase.